A 138-amino-acid polypeptide reads, in one-letter code: MALLPDKEKLLRNFLRCANWEEKYLYIIELGQRLPELRDEDRSPQNSIQGCQSQVWIVMRQNAQGIIELQGDSDAAIVKGLIAVVFILYDQMTPQDVVNFDVRPWFEKMALTQHLTPSRSQGLEAMIRAIRAKAAALS.

The active-site Cysteine persulfide intermediate is Cys51.

It belongs to the SufE family. Homodimer. Interacts with SufS.

The protein resides in the cytoplasm. The protein operates within cofactor biosynthesis; iron-sulfur cluster biosynthesis. Its function is as follows. Participates in cysteine desulfuration mediated by SufS. Cysteine desulfuration mobilizes sulfur from L-cysteine to yield L-alanine and constitutes an essential step in sulfur metabolism for biosynthesis of a variety of sulfur-containing biomolecules. Functions as a sulfur acceptor for SufS, by mediating the direct transfer of the sulfur atom from the S-sulfanylcysteine of SufS, an intermediate product of cysteine desulfuration process. This Escherichia coli O157:H7 protein is Cysteine desulfuration protein SufE.